The sequence spans 1127 residues: MNNQRKKARSTPFNMLRRERNRVSTVQQLTKRFSLGMLQGRGPLKLFMALVALPRFLTIPPTAGILKRWGTIKKSKAINDVRGCRKEIGRMLNILNRRRRTAGVIIMLIPTVMAFHLTTRNGEPHMIVSRQEKGKSLLFKTEDGVNMCTLMAIDFGELCEDTITYKCPLLRQNEPEDIDCWCNSTSTWVTYGTRTTTGEHGREKRSVALVPHVGMGLETGTETWMSSDGAWKRACRMETWILRHPGFTIMAAILAYTIGTTHFQRGLILILQTAVAPSMTMRCIGISNRDFVEGVSGGSWVDIVLEHGSCVTTMAKNKPTLDFELIKTEATQPATLRKYCIEAKLTNTTTESRCPTQGEPSLNEEQDKRFVCKHSMVDRGWGNGCGLFGKGGIVTCAMFTCKKNMEGNIVQPENLEYTIVITPHSGEEHAVGNDTGKHGKEIKITPQSSITEAELTGYGTVTMECSPRTGLDFNEIVLLQMEDKAWLVHRQWFLDLPLPWLPGADTQGSNRIQKETLVTFKNPHAKKQDVVVLGSQEGAMHTALTGATEIQMSSGNLLFTGHLKCRLRMDKLQLKGMSYSMCTGKFQIVKEIAETQHGTIVIRVQYEGDGSPCKIPLEIMDLEKRHVLGRLITVNPIVTEKDSPVNIEAEPPFGDSYIIIGVEPGQLKLHWFKKGSSIGQMFETTMRGAKRMAILGDTAWDFGSLGGVFTSIGKALHQVFGAIYGAAFSGVSWTMKILIGVIITWIGMNSRSTSLSVSLVLVGVITLYLGAMVQADSGCVVSWKNKELKCGSGIFITDNVHTWTEQYNFQPESPSKLASAMRKAHEEGICGIRSVTRLENLMWKQITPELKHILSEIEVKLTIMTGDIKGIMQAGTRSLRPQPTELKFSWETWRKAKMVPTEPHNQTFLIDGPETAECPNTNRAWNSLEVEDYGFGVFTTNIWLKLREKEDLCCDSKVMSAASKDNRAVHDDMGYWIESALNDTWKMEKASFIEVKSCHWPKSHTLWINGGLESEMIIPKSFAGPVSQHNYRPGYYTQTAGPRHLGKLEMDFDFCEGTTVVVTEDCGNRGPSLRTTTASGKLITEWCCRSSTIPPLRIKGEDGCWYGMEIRPLKEKEENLVTSLVTA.

Positions 1–15 (MNNQRKKARSTPFNM) are interaction with host EXOC1. At 1–101 (MNNQRKKARS…LNILNRRRRT (101 aa)) the chain is on the cytoplasmic side. Residues 37-72 (MLQGRGPLKLFMALVALPRFLTIPPTAGILKRWGTI) are hydrophobic; homodimerization of capsid protein C. The propeptide at 101–114 (TAGVIIMLIPTVMA) is ER anchor for the capsid protein C, removed in mature form by serine protease NS3. A helical membrane pass occupies residues 102-122 (AGVIIMLIPTVMAFHLTTRNG). Residues 123 to 238 (EPHMIVSRQE…GAWKRACRME (116 aa)) are Extracellular-facing. An N-linked (GlcNAc...) asparagine; by host glycan is attached at asparagine 183. Residues 239–259 (TWILRHPGFTIMAAILAYTIG) form a helical membrane-spanning segment. Topologically, residues 260-265 (TTHFQR) are cytoplasmic. A helical transmembrane segment spans residues 266-280 (GLILILQTAVAPSMT). At 281–725 (MRCIGISNRD…LHQVFGAIYG (445 aa)) the chain is on the extracellular side. 4 cysteine pairs are disulfide-bonded: cysteine 283-cysteine 310, cysteine 340-cysteine 401, cysteine 354-cysteine 385, and cysteine 372-cysteine 396. Asparagine 347 is a glycosylation site (N-linked (GlcNAc...) asparagine; by host). A fusion peptide region spans residues 378 to 391 (DRGWGNGCGLFGKG). Asparagine 433 carries N-linked (GlcNAc...) asparagine; by host glycosylation. Disulfide bonds link cysteine 465/cysteine 565 and cysteine 582/cysteine 613. A helical membrane pass occupies residues 726–746 (AAFSGVSWTMKILIGVIITWI). The Cytoplasmic segment spans residues 747 to 754 (GMNSRSTS). The helical transmembrane segment at 755-773 (LSVSLVLVGVITLYLGAMV) threads the bilayer. Residues 774 to 1127 (QADSGCVVSW…ENLVTSLVTA (354 aa)) lie on the Extracellular side of the membrane. Disulfide bonds link cysteine 779-cysteine 790, cysteine 830-cysteine 918, cysteine 954-cysteine 998, cysteine 1055-cysteine 1104, and cysteine 1066-cysteine 1088. N-linked (GlcNAc...) asparagine; by host glycosylation is found at asparagine 905 and asparagine 982.

As to quaternary structure, homodimer. Interacts (via N-terminus) with host EXOC1 (via C-terminus); this interaction results in EXOC1 degradation through the proteasome degradation pathway. Forms heterodimers with envelope protein E in the endoplasmic reticulum and Golgi. In terms of assembly, homodimer; in the endoplasmic reticulum and Golgi. Interacts with protein prM. Interacts with non-structural protein 1. As to quaternary structure, homodimer; Homohexamer when secreted. Interacts with envelope protein E. Post-translationally, specific enzymatic cleavages in vivo yield mature proteins. Cleavages in the lumen of endoplasmic reticulum are performed by host signal peptidase, wereas cleavages in the cytoplasmic side are performed by the Serine protease NS3. Signal cleavage at the 2K-4B site requires a prior NS3 protease-mediated cleavage at the 4A-2K site. In terms of processing, cleaved in post-Golgi vesicles by a host furin, releasing the mature small envelope protein M, and peptide pr. This cleavage is incomplete as up to 30% of viral particles still carry uncleaved prM. N-glycosylated. Post-translationally, N-glycosylated. The excreted form is glycosylated and this is required for efficient secretion of the protein from infected cells.

The protein localises to the virion. The protein resides in the host nucleus. It is found in the host cytoplasm. It localises to the host perinuclear region. Its subcellular location is the secreted. The protein localises to the virion membrane. The protein resides in the host endoplasmic reticulum membrane. Plays a role in virus budding by binding to the cell membrane and gathering the viral RNA into a nucleocapsid that forms the core of a mature virus particle. During virus entry, may induce genome penetration into the host cytoplasm after hemifusion induced by the surface proteins. Can migrate to the cell nucleus where it modulates host functions. Overcomes the anti-viral effects of host EXOC1 by sequestering and degrading the latter through the proteasome degradation pathway. Its function is as follows. Inhibits RNA silencing by interfering with host Dicer. Functionally, prevents premature fusion activity of envelope proteins in trans-Golgi by binding to envelope protein E at pH6.0. After virion release in extracellular space, gets dissociated from E dimers. In terms of biological role, acts as a chaperone for envelope protein E during intracellular virion assembly by masking and inactivating envelope protein E fusion peptide. prM is the only viral peptide matured by host furin in the trans-Golgi network probably to avoid catastrophic activation of the viral fusion activity in acidic GolGi compartment prior to virion release. prM-E cleavage is inefficient, and many virions are only partially matured. These uncleaved prM would play a role in immune evasion. May play a role in virus budding. Exerts cytotoxic effects by activating a mitochondrial apoptotic pathway through M ectodomain. May display a viroporin activity. Its function is as follows. Binds to host cell surface receptor and mediates fusion between viral and cellular membranes. Envelope protein is synthesized in the endoplasmic reticulum in the form of heterodimer with protein prM. They play a role in virion budding in the ER, and the newly formed immature particle is covered with 60 spikes composed of heterodimer between precursor prM and envelope protein E. The virion is transported to the Golgi apparatus where the low pH causes dissociation of PrM-E heterodimers and formation of E homodimers. prM-E cleavage is inefficient, and many virions are only partially matured. These uncleaved prM would play a role in immune evasion. Functionally, involved in immune evasion, pathogenesis and viral replication. Once cleaved off the polyprotein, is targeted to three destinations: the viral replication cycle, the plasma membrane and the extracellular compartment. Essential for viral replication. Required for formation of the replication complex and recruitment of other non-structural proteins to the ER-derived membrane structures. Excreted as a hexameric lipoparticle that plays a role against host immune response. Antagonizing the complement function. Binds to the host macrophages and dendritic cells. Inhibits signal transduction originating from Toll-like receptor 3 (TLR3). In terms of biological role, disrupts the host endothelial glycocalyx layer of host pulmonary microvascular endothelial cells, inducing degradation of sialic acid and shedding of heparan sulfate proteoglycans. NS1 induces expression of sialidases, heparanase, and activates cathepsin L, which activates heparanase via enzymatic cleavage. These effects are probably linked to the endothelial hyperpermeability observed in severe dengue disease. This is Genome polyprotein from Dengue virus type 2 (strain China/D2-04) (DENV-2).